Reading from the N-terminus, the 343-residue chain is Cell invasion protein SipD (343 aa).

The disordered stretch occupies residues 1-26; that stretch reads MLNIQNYSASPHPGIVAERPQTPSAS. Positions 295 to 322 form a coiled coil; the sequence is KAQEENMKTTLQTLTQKYSNANSLYDNL.

It belongs to the invasin protein D family.

It is found in the secreted. Its function is as follows. Required for translocation of effector proteins via the type III secretion system SPI-1, which is essential for an efficient bacterial internalization. Probably acts by modulating the secretion of SipA, SipB, and SipC. The chain is Cell invasion protein SipD (sipD) from Salmonella typhimurium (strain LT2 / SGSC1412 / ATCC 700720).